The sequence spans 252 residues: Ribosomal RNA small subunit methyltransferase J (252 aa).

S-adenosyl-L-methionine contacts are provided by residues 101–102 (RD), 117–118 (ER), 153–154 (SS), and aspartate 171.

The protein belongs to the methyltransferase superfamily. RsmJ family.

The protein resides in the cytoplasm. It catalyses the reaction guanosine(1516) in 16S rRNA + S-adenosyl-L-methionine = N(2)-methylguanosine(1516) in 16S rRNA + S-adenosyl-L-homocysteine + H(+). Specifically methylates the guanosine in position 1516 of 16S rRNA. This chain is Ribosomal RNA small subunit methyltransferase J, found in Salmonella heidelberg (strain SL476).